Reading from the N-terminus, the 252-residue chain is Trans-aconitate 2-methyltransferase (252 aa).

This sequence belongs to the methyltransferase superfamily. Tam family.

The protein localises to the cytoplasm. The catalysed reaction is trans-aconitate + S-adenosyl-L-methionine = (E)-3-(methoxycarbonyl)pent-2-enedioate + S-adenosyl-L-homocysteine. In terms of biological role, catalyzes the S-adenosylmethionine monomethyl esterification of trans-aconitate. The polypeptide is Trans-aconitate 2-methyltransferase (Escherichia fergusonii (strain ATCC 35469 / DSM 13698 / CCUG 18766 / IAM 14443 / JCM 21226 / LMG 7866 / NBRC 102419 / NCTC 12128 / CDC 0568-73)).